A 329-amino-acid polypeptide reads, in one-letter code: Acetyl-coenzyme A carboxylase carboxyl transferase subunit alpha (329 aa).

In terms of domain architecture, CoA carboxyltransferase C-terminal spans 40–294; the sequence is QLETLAARRR…KNALEKHLSE (255 aa).

This sequence belongs to the AccA family. Acetyl-CoA carboxylase is a heterohexamer composed of biotin carboxyl carrier protein (AccB), biotin carboxylase (AccC) and two subunits each of ACCase subunit alpha (AccA) and ACCase subunit beta (AccD).

The protein localises to the cytoplasm. The catalysed reaction is N(6)-carboxybiotinyl-L-lysyl-[protein] + acetyl-CoA = N(6)-biotinyl-L-lysyl-[protein] + malonyl-CoA. It participates in lipid metabolism; malonyl-CoA biosynthesis; malonyl-CoA from acetyl-CoA: step 1/1. In terms of biological role, component of the acetyl coenzyme A carboxylase (ACC) complex. First, biotin carboxylase catalyzes the carboxylation of biotin on its carrier protein (BCCP) and then the CO(2) group is transferred by the carboxyltransferase to acetyl-CoA to form malonyl-CoA. This Prochlorococcus marinus (strain NATL2A) protein is Acetyl-coenzyme A carboxylase carboxyl transferase subunit alpha.